Reading from the N-terminus, the 210-residue chain is Large ribosomal subunit protein uL3 (210 aa).

The interval 133–152 (ATHGNSLSHRVHGSTGQNQT) is disordered. Gln151 is modified (N5-methylglutamine).

It belongs to the universal ribosomal protein uL3 family. Part of the 50S ribosomal subunit. Forms a cluster with proteins L14 and L19. Post-translationally, methylated by PrmB.

In terms of biological role, one of the primary rRNA binding proteins, it binds directly near the 3'-end of the 23S rRNA, where it nucleates assembly of the 50S subunit. In Francisella philomiragia subsp. philomiragia (strain ATCC 25017 / CCUG 19701 / FSC 153 / O#319-036), this protein is Large ribosomal subunit protein uL3.